A 413-amino-acid polypeptide reads, in one-letter code: Transcription factor bHLH23 (413 aa).

The interval 40-75 (SSQTQTPSCDPPLILRGSGSGDGEGNGPLPQPPPPL) is disordered. A Phosphothreonine modification is found at Thr186. Ser191 is modified (phosphoserine). 2 disordered regions span residues 232-278 (TEPV…RSRA) and 391-413 (ETEQ…KMFS). Residues 246-257 (TDERKRKTREET) show a composition bias toward basic and acidic residues. Residues 277–326 (RAAIMHKLSERRRRQKINEMMKALQELLPRCTKTDRSSMLDDVIEYVKSL) form the bHLH domain.

Homodimer. As to expression, expressed constitutively in leaves, stems, and flowers.

The protein localises to the nucleus. This chain is Transcription factor bHLH23 (BHLH23), found in Arabidopsis thaliana (Mouse-ear cress).